We begin with the raw amino-acid sequence, 528 residues long: D-3-phosphoglycerate dehydrogenase (528 aa).

Residues 151-152, aspartate 171, 230-232, and aspartate 256 contribute to the NAD(+) site; these read RI and AAR. The active site involves arginine 232. Glutamate 261 is an active-site residue. Catalysis depends on histidine 279, which acts as the Proton donor. Residue 279-282 participates in NAD(+) binding; the sequence is HLGA. The ACT domain occupies 455–527; that stretch reads NLIIHYVDRP…DAYKLEVVDL (73 aa).

This sequence belongs to the D-isomer specific 2-hydroxyacid dehydrogenase family.

It catalyses the reaction (2R)-3-phosphoglycerate + NAD(+) = 3-phosphooxypyruvate + NADH + H(+). The catalysed reaction is (R)-2-hydroxyglutarate + NAD(+) = 2-oxoglutarate + NADH + H(+). It functions in the pathway amino-acid biosynthesis; L-serine biosynthesis; L-serine from 3-phospho-D-glycerate: step 1/3. Its function is as follows. Catalyzes the reversible oxidation of 3-phospho-D-glycerate to 3-phosphonooxypyruvate, the first step of the phosphorylated L-serine biosynthesis pathway. Also catalyzes the reversible oxidation of 2-hydroxyglutarate to 2-oxoglutarate. This Mycobacterium bovis (strain ATCC BAA-935 / AF2122/97) protein is D-3-phosphoglycerate dehydrogenase (serA).